The following is a 787-amino-acid chain: Protein translocase subunit SecA (787 aa).

ATP contacts are provided by residues glutamine 85, 103-107 (GEGKT), and aspartate 492.

It belongs to the SecA family. In terms of assembly, monomer and homodimer. Part of the essential Sec protein translocation apparatus which comprises SecA, SecYEG and auxiliary proteins SecDF. Other proteins may also be involved.

The protein resides in the cell membrane. The protein localises to the cytoplasm. It carries out the reaction ATP + H2O + cellular proteinSide 1 = ADP + phosphate + cellular proteinSide 2.. Functionally, part of the Sec protein translocase complex. Interacts with the SecYEG preprotein conducting channel. Has a central role in coupling the hydrolysis of ATP to the transfer of proteins into and across the cell membrane, serving as an ATP-driven molecular motor driving the stepwise translocation of polypeptide chains across the membrane. The chain is Protein translocase subunit SecA from Lactiplantibacillus plantarum (strain ATCC BAA-793 / NCIMB 8826 / WCFS1) (Lactobacillus plantarum).